The following is a 349-amino-acid chain: Holliday junction branch migration complex subunit RuvB (349 aa).

The tract at residues Met1–Tyr181 is large ATPase domain (RuvB-L). Residues Leu20, Arg21, Gly62, Lys65, Thr66, Thr67, Glu128–Tyr130, Arg171, Tyr181, and Arg218 each bind ATP. Thr66 provides a ligand contact to Mg(2+). The segment at Asn182–Glu252 is small ATPAse domain (RuvB-S). The segment at Asp255–Lys349 is head domain (RuvB-H). DNA is bound by residues Arg310 and Arg315.

The protein belongs to the RuvB family. In terms of assembly, homohexamer. Forms an RuvA(8)-RuvB(12)-Holliday junction (HJ) complex. HJ DNA is sandwiched between 2 RuvA tetramers; dsDNA enters through RuvA and exits via RuvB. An RuvB hexamer assembles on each DNA strand where it exits the tetramer. Each RuvB hexamer is contacted by two RuvA subunits (via domain III) on 2 adjacent RuvB subunits; this complex drives branch migration. In the full resolvosome a probable DNA-RuvA(4)-RuvB(12)-RuvC(2) complex forms which resolves the HJ.

It is found in the cytoplasm. It carries out the reaction ATP + H2O = ADP + phosphate + H(+). Its function is as follows. The RuvA-RuvB-RuvC complex processes Holliday junction (HJ) DNA during genetic recombination and DNA repair, while the RuvA-RuvB complex plays an important role in the rescue of blocked DNA replication forks via replication fork reversal (RFR). RuvA specifically binds to HJ cruciform DNA, conferring on it an open structure. The RuvB hexamer acts as an ATP-dependent pump, pulling dsDNA into and through the RuvAB complex. RuvB forms 2 homohexamers on either side of HJ DNA bound by 1 or 2 RuvA tetramers; 4 subunits per hexamer contact DNA at a time. Coordinated motions by a converter formed by DNA-disengaged RuvB subunits stimulates ATP hydrolysis and nucleotide exchange. Immobilization of the converter enables RuvB to convert the ATP-contained energy into a lever motion, pulling 2 nucleotides of DNA out of the RuvA tetramer per ATP hydrolyzed, thus driving DNA branch migration. The RuvB motors rotate together with the DNA substrate, which together with the progressing nucleotide cycle form the mechanistic basis for DNA recombination by continuous HJ branch migration. Branch migration allows RuvC to scan DNA until it finds its consensus sequence, where it cleaves and resolves cruciform DNA. This chain is Holliday junction branch migration complex subunit RuvB, found in Clostridium acetobutylicum (strain ATCC 824 / DSM 792 / JCM 1419 / IAM 19013 / LMG 5710 / NBRC 13948 / NRRL B-527 / VKM B-1787 / 2291 / W).